We begin with the raw amino-acid sequence, 231 residues long: NifU-like protein 1, chloroplastic (231 aa).

The transit peptide at 1–69 directs the protein to the chloroplast; it reads MMASLATSIS…SSQGEKISPL (69 aa).

The protein belongs to the NifU family. In terms of assembly, homodimer; disulfide-linked. Predominantly expressed in floral stalks and siliques. Expressed in leaves, cauline leaves, flower stalks and flowers (at protein level).

The protein resides in the plastid. The protein localises to the chloroplast stroma. Its function is as follows. Molecular scaffold for [Fe-S] cluster assembly of chloroplastic iron-sulfur proteins. This is NifU-like protein 1, chloroplastic (NIFU1) from Arabidopsis thaliana (Mouse-ear cress).